The chain runs to 63 residues: MTILKTINNLNIFNSKIKININQNEIAYELEHKSIYTKNSFSKAGDIMDFYSWRDKNYPYITR.

This is an uncharacterized protein from Dictyostelium discoideum (Social amoeba).